The chain runs to 326 residues: Tagatose 1,6-diphosphate aldolase (326 aa).

It belongs to the aldolase LacD family.

The enzyme catalyses D-tagatofuranose 1,6-bisphosphate = D-glyceraldehyde 3-phosphate + dihydroxyacetone phosphate. It participates in carbohydrate metabolism; D-tagatose 6-phosphate degradation; D-glyceraldehyde 3-phosphate and glycerone phosphate from D-tagatose 6-phosphate: step 2/2. The chain is Tagatose 1,6-diphosphate aldolase from Staphylococcus aureus (strain MSSA476).